A 474-amino-acid polypeptide reads, in one-letter code: Nitrosuccinate lyase (474 aa).

S295 serves as the catalytic Proton acceptor. Residues K301 and N303 each contribute to the fumarate site. The Proton donor role is filled by R334.

Belongs to the class-II fumarase/aspartase family.

The enzyme catalyses 2-nitrobutanedioate = fumarate + nitrite + H(+). Its function is as follows. Involved in the biosynthesis of desferrioxamine derivatives which have iron-binding properties and may act as siderophores. Catalyzes the formation of nitrous acid from nitrosuccinic acid (2-nitrobutanedioate) by elimination of its nitro group. This chain is Nitrosuccinate lyase, found in Streptomyces davaonensis (strain DSM 101723 / JCM 4913 / KCC S-0913 / 768).